Reading from the N-terminus, the 61-residue chain is [Val1,Thr6]-bradykinyl-Val,Asp (61 aa).

Residues 1–22 (MAFLKKSLFLVLFLGVVSLSFC) form the signal peptide. Positions 23–48 (EEEEREEHEEEKREAEAAESAENLIS) are excised as a propeptide. Residues 27-61 (REEHEEEKREAEAAESAENLISKRVPPGFTPFRVD) are disordered.

As to expression, expressed by the skin glands. Expression levels in inguinal glands and granular glands are virtually the same.

Its subcellular location is the secreted. Induces contraction of rat ileum smooth muscle (EC(50)=2.73 uM) but has no activity towards rat smooth muscle from tail artery, urinary bladder or uterus. Binds to both bradykinin receptor B1 (BDKRB1) and B2 (BDKRB2); the effect via BDKRB1 is stronger. The polypeptide is [Val1,Thr6]-bradykinyl-Val,Asp (Physalaemus nattereri (Cuyaba dwarf frog)).